Consider the following 205-residue polypeptide: Nitrophorin-7 (205 aa).

The signal sequence occupies residues 1–20; the sequence is MELYTALLAVTILSPSSIVG. 2 disulfide bridges follow: cysteine 25–cysteine 144 and cysteine 62–cysteine 193. Histamine is bound at residue aspartate 52. Histidine 80 and asparagine 91 together coordinate heme. Aspartate 154 lines the histamine pocket.

Belongs to the calycin superfamily. Nitrophorin family. Forms oligomers (at pH 5.5). The cofactor is heme b. In terms of tissue distribution, expressed in the endothelial cells of the salivary glands.

It localises to the secreted. It carries out the reaction 3 nitrite + 2 H(+) = 2 nitric oxide + nitrate + H2O. Its function is as follows. Converts nitrite as the sole substrate to form nitric oxide gas (NO). NO(2-) serves both as an electron donor and as an electron acceptor. Binds to negatively charged cell surfaces of activated platelets; binds to L-a-phosphatidyl-L-serine (PS)-bearing phospholipid membranes. Once bound on an activated platelet, NP7 releases its stored nitric oxide gas (NO) into the victim's tissues while feeding, resulting in vasodilation and inhibition of platelet aggregation. Also acts as an anticoagulant by blocking coagulation-factor binding sites. Has antihistamine activity; binds histamine with high affinity. The polypeptide is Nitrophorin-7 (Rhodnius prolixus (Triatomid bug)).